The chain runs to 249 residues: Enolase-phosphatase E1 (249 aa).

This sequence belongs to the HAD-like hydrolase superfamily. MasA/MtnC family. Monomer. The cofactor is Mg(2+).

It carries out the reaction 5-methylsulfanyl-2,3-dioxopentyl phosphate + H2O = 1,2-dihydroxy-5-(methylsulfanyl)pent-1-en-3-one + phosphate. It functions in the pathway amino-acid biosynthesis; L-methionine biosynthesis via salvage pathway; L-methionine from S-methyl-5-thio-alpha-D-ribose 1-phosphate: step 3/6. It participates in amino-acid biosynthesis; L-methionine biosynthesis via salvage pathway; L-methionine from S-methyl-5-thio-alpha-D-ribose 1-phosphate: step 4/6. Its function is as follows. Bifunctional enzyme that catalyzes the enolization of 2,3-diketo-5-methylthiopentyl-1-phosphate (DK-MTP-1-P) into the intermediate 2-hydroxy-3-keto-5-methylthiopentenyl-1-phosphate (HK-MTPenyl-1-P), which is then dephosphorylated to form the acireductone 1,2-dihydroxy-3-keto-5-methylthiopentene (DHK-MTPene). This chain is Enolase-phosphatase E1, found in Synechococcus sp. (strain CC9605).